Here is a 442-residue protein sequence, read N- to C-terminus: Vacuolar zinc transporter ZRC1 (442 aa).

Residues 1–8 are Cytoplasmic-facing; it reads MITGKELR. Residues 9–29 traverse the membrane as a helical segment; sequence IISLLTLDTVFFLLEITIGYM. Residues 30 to 32 lie on the Vacuolar side of the membrane; that stretch reads SHS. Residues 33–53 traverse the membrane as a helical segment; that stretch reads LALIADSFHMLNDIISLLVAL. The Cytoplasmic portion of the chain corresponds to 54 to 75; the sequence is WAVDVAKNRGPDAKYTYGWKRA. The chain crosses the membrane as a helical span at residues 76-96; it reads EILGALINAVFLIALCFSIMI. Topologically, residues 97-112 are vacuolar; sequence EALQRLIEPQEIQNPR. Residues 113-133 form a helical membrane-spanning segment; it reads LVLYVGVAGLISNVVGLFLFH. At 134–235 the chain is on the cytoplasmic side; sequence DHGSDSLHSH…GHRSLNMHGV (102 aa). 3 short sequence motifs (histidine repeat) span residues 141–145, 163–167, and 216–220; these read HSHSH and HDHSH. Disordered stretches follow at residues 141–170 and 208–227; these read HSHS…HASL and QPLL…KPGH. Residues 149–170 are compositionally biased toward polar residues; the sequence is ESGNNDLDIESNATHSHSHASL. Over residues 212 to 224 the composition is skewed to basic and acidic residues; the sequence is NHDDHDHSHESKK. Residues 236–256 form a helical membrane-spanning segment; sequence FLHVLGDALGNIGVIAAALFI. Topologically, residues 257–265 are vacuolar; sequence WKTEYSWRY. A helical membrane pass occupies residues 266–286; that stretch reads YSDPIVSLIITIIIFSSALPL. Topologically, residues 287–442 are cytoplasmic; that stretch reads SRRASRILLQ…AVNCNTSNCL (156 aa). Lys357 participates in a covalent cross-link: Glycyl lysine isopeptide (Lys-Gly) (interchain with G-Cter in ubiquitin). 3 positions are modified to phosphoserine: Ser387, Ser393, and Ser397. The segment at 391-419 is disordered; the sequence is GGSPSSSQEAFDSHGNTEHGRKKRSPTAY.

It belongs to the cation diffusion facilitator (CDF) transporter (TC 2.A.4) family. SLC30A subfamily.

Its subcellular location is the vacuole membrane. It carries out the reaction Zn(2+)(in) = Zn(2+)(out). Its function is as follows. Vacuolar transporter that regulates zinc homeostasis by mediating zinc transport and storage into the vacuole. ZRC1 senses zinc availability in the cytosol, which might be performed through the histidine repeat motifs, and transports zinc from the cytosol to the vacuole if zinc in cytosol is abundant, conferring resistance to zinc toxicity. Plays a role in resistance to zinc shock resulting from sudden influx of zinc into cytoplasm when ZRT1 and ZRT2 are induced in response to zinc depletion. The polypeptide is Vacuolar zinc transporter ZRC1 (Saccharomyces cerevisiae (strain ATCC 204508 / S288c) (Baker's yeast)).